Reading from the N-terminus, the 320-residue chain is Malate dehydrogenase (320 aa).

Residues Gly10–Gly15 and Asp34 contribute to the NAD(+) site. Substrate-binding residues include Arg83 and Arg89. NAD(+) is bound by residues Asn96 and Ile119–Asn121. Substrate contacts are provided by Asn121 and Arg152. His176 functions as the Proton acceptor in the catalytic mechanism.

This sequence belongs to the LDH/MDH superfamily. MDH type 3 family.

The enzyme catalyses (S)-malate + NAD(+) = oxaloacetate + NADH + H(+). Its function is as follows. Catalyzes the reversible oxidation of malate to oxaloacetate. The chain is Malate dehydrogenase from Methylobacterium sp. (strain 4-46).